A 441-amino-acid polypeptide reads, in one-letter code: tRNA-2-methylthio-N(6)-dimethylallyladenosine synthase (441 aa).

The MTTase N-terminal domain occupies 5–121 (KKLFIKTYGC…LPQMEARLRE (117 aa)). Positions 14, 50, 84, 159, 163, and 166 each coordinate [4Fe-4S] cluster. Positions 145-380 (ARRAPSAFLT…TRQQQDIQQS (236 aa)) constitute a Radical SAM core domain. Positions 379 to 441 (QSMVGRDVSV…RNSLAAVTLA (63 aa)) constitute a TRAM domain.

Belongs to the methylthiotransferase family. MiaB subfamily. As to quaternary structure, monomer. Requires [4Fe-4S] cluster as cofactor.

The protein localises to the cytoplasm. It catalyses the reaction N(6)-dimethylallyladenosine(37) in tRNA + (sulfur carrier)-SH + AH2 + 2 S-adenosyl-L-methionine = 2-methylsulfanyl-N(6)-dimethylallyladenosine(37) in tRNA + (sulfur carrier)-H + 5'-deoxyadenosine + L-methionine + A + S-adenosyl-L-homocysteine + 2 H(+). Its function is as follows. Catalyzes the methylthiolation of N6-(dimethylallyl)adenosine (i(6)A), leading to the formation of 2-methylthio-N6-(dimethylallyl)adenosine (ms(2)i(6)A) at position 37 in tRNAs that read codons beginning with uridine. The protein is tRNA-2-methylthio-N(6)-dimethylallyladenosine synthase of Roseobacter denitrificans (strain ATCC 33942 / OCh 114) (Erythrobacter sp. (strain OCh 114)).